A 625-amino-acid polypeptide reads, in one-letter code: Branchpoint-bridging protein (625 aa).

Residues 1 to 16 (MSWRSNAQRTGMNAQP) show a composition bias toward polar residues. Disordered regions lie at residues 1-154 (MSWR…AIGA) and 177-206 (LRSG…RTNT). Residues 22–31 (RWGGAGGAGE) are compositionally biased toward gly residues. Low complexity-rich tracts occupy residues 32-61 (GPSS…SQPY), 70-91 (SSSS…AVAA), and 110-130 (SYAA…GADA). A compositionally biased stretch (basic and acidic residues) spans 177-190 (LRSGDFVPPDRERS). The region spanning 253-330 (YLPIKEFPEI…ASVKKCIKLI (78 aa)) is the KH domain. 2 consecutive CCHC-type zinc fingers follow at residues 368-385 (QLCK…ECPE) and 393-410 (IICH…DCTQ). Residues 466–533 (GPDGKKIPPW…HAYHQQQQAY (68 aa)) form a disordered region. Over residues 488 to 503 (APRGGDAGRGGWGHRG) the composition is skewed to gly residues. Residues 516–533 (QHQQQQHPHAYHQQQQAY) are compositionally biased toward low complexity.

It belongs to the BBP/SF1 family.

The protein localises to the nucleus. Necessary for the splicing of pre-mRNA. Has a role in the recognition of the branch site (5'-UACUAAC-3'), the pyrimidine tract and the 3'-splice site at the 3'-end of introns. This chain is Branchpoint-bridging protein (BBP), found in Mycosarcoma maydis (Corn smut fungus).